Consider the following 266-residue polypeptide: DNA damage-regulated autophagy modulator protein 2 (266 aa).

6 helical membrane-spanning segments follow: residues L8–I28, K53–V73, I88–I108, F118–V138, L160–L180, and I207–I227.

Belongs to the DRAM/TMEM150 family. Expression is down-regulated in ovarian tumors (at protein level). Widely expressed with highest levels in placenta and heart. Expressed in the retina. Not detected in brain or thymus.

The protein localises to the lysosome membrane. It is found in the photoreceptor inner segment. The protein resides in the apical cell membrane. In terms of biological role, plays a role in the initiation of autophagy. In the retina, might be involved in the process of photoreceptor cells renewal and recycling to preserve visual function. Induces apoptotic cell death when coexpressed with DRAM1. The chain is DNA damage-regulated autophagy modulator protein 2 (DRAM2) from Homo sapiens (Human).